The sequence spans 227 residues: Lipoprotein-releasing system ATP-binding protein LolD (227 aa).

In terms of domain architecture, ABC transporter spans 6-227; that stretch reads LTSQKLYKSY…LHEGSLYARE (222 aa). ATP is bound at residue 42-49; the sequence is GPSGSGKS.

Belongs to the ABC transporter superfamily. Lipoprotein translocase (TC 3.A.1.125) family. In terms of assembly, the complex is composed of two ATP-binding proteins (LolD) and two transmembrane proteins (LolC and LolE).

Its subcellular location is the cell inner membrane. Its function is as follows. Part of the ABC transporter complex LolCDE involved in the translocation of mature outer membrane-directed lipoproteins, from the inner membrane to the periplasmic chaperone, LolA. Responsible for the formation of the LolA-lipoprotein complex in an ATP-dependent manner. The chain is Lipoprotein-releasing system ATP-binding protein LolD from Legionella pneumophila (strain Paris).